The chain runs to 590 residues: Aspartate--tRNA(Asp/Asn) ligase (590 aa).

Glu170 is an L-aspartate binding site. An aspartate region spans residues 194-197; the sequence is QLFK. Arg216 contacts L-aspartate. Residues 216–218 and Gln225 contribute to the ATP site; that span reads RDE. L-aspartate is bound at residue His448. Residue Glu482 participates in ATP binding. Arg489 serves as a coordination point for L-aspartate. Residue 534-537 participates in ATP binding; that stretch reads GWDR. Residues 557-590 form a disordered region; that stretch reads SGGGADPLTGAPAPITPQQRRESGIDAKPKKDGE. Positions 575–590 are enriched in basic and acidic residues; it reads QRRESGIDAKPKKDGE.

Belongs to the class-II aminoacyl-tRNA synthetase family. Type 1 subfamily. As to quaternary structure, homodimer.

It is found in the cytoplasm. The enzyme catalyses tRNA(Asx) + L-aspartate + ATP = L-aspartyl-tRNA(Asx) + AMP + diphosphate. Aspartyl-tRNA synthetase with relaxed tRNA specificity since it is able to aspartylate not only its cognate tRNA(Asp) but also tRNA(Asn). Reaction proceeds in two steps: L-aspartate is first activated by ATP to form Asp-AMP and then transferred to the acceptor end of tRNA(Asp/Asn). In Mycobacterium sp. (strain KMS), this protein is Aspartate--tRNA(Asp/Asn) ligase.